Consider the following 314-residue polypeptide: Testis-specific Y-encoded protein 9 (314 aa).

This sequence belongs to the nucleosome assembly protein (NAP) family.

It is found in the cytoplasm. It localises to the nucleus. Its function is as follows. May be involved in sperm differentiation and proliferation. This Homo sapiens (Human) protein is Testis-specific Y-encoded protein 9.